The sequence spans 129 residues: MKVANDYEKRDNNSYYVDHGSEGTNITRDNDGFFEETAAEIAEPYRAADRSNDQDNDRSGGNVNEGRGIGYIALALSIISLFVLPVLLGAAGIIVGYIARRRGAQGLGAWAMGIGVVSLVLGIFIIPFF.

Positions 44–63 are disordered; that stretch reads PYRAADRSNDQDNDRSGGNV. Over residues 46–58 the composition is skewed to basic and acidic residues; it reads RAADRSNDQDNDR. 2 helical membrane passes run 78–98 and 109–129; these read IISL…VGYI and AWAM…IPFF.

It localises to the cell membrane. This is an uncharacterized protein from Bacillus subtilis (strain 168).